The following is a 187-amino-acid chain: Large ribosomal subunit protein eL18B (187 aa).

Thr134 is subject to Phosphothreonine. Phosphoserine is present on Ser136.

Belongs to the eukaryotic ribosomal protein eL18 family. Component of the large ribosomal subunit (LSU). Mature yeast ribosomes consist of a small (40S) and a large (60S) subunit. The 40S small subunit contains 1 molecule of ribosomal RNA (18S rRNA) and at least 33 different proteins. The large 60S subunit contains 3 rRNA molecules (25S, 5.8S and 5S rRNA) and at least 46 different proteins. eL18 interacts with NAP1.

It localises to the cytoplasm. In terms of biological role, component of the ribosome, a large ribonucleoprotein complex responsible for the synthesis of proteins in the cell. The small ribosomal subunit (SSU) binds messenger RNAs (mRNAs) and translates the encoded message by selecting cognate aminoacyl-transfer RNA (tRNA) molecules. The large subunit (LSU) contains the ribosomal catalytic site termed the peptidyl transferase center (PTC), which catalyzes the formation of peptide bonds, thereby polymerizing the amino acids delivered by tRNAs into a polypeptide chain. The nascent polypeptides leave the ribosome through a tunnel in the LSU and interact with protein factors that function in enzymatic processing, targeting, and the membrane insertion of nascent chains at the exit of the ribosomal tunnel. The chain is Large ribosomal subunit protein eL18B (rpl1802) from Schizosaccharomyces pombe (strain 972 / ATCC 24843) (Fission yeast).